The primary structure comprises 130 residues: Probable 15 kDa heat shock protein (130 aa).

The sHSP domain occupies 21-130 (ERVRILAPRV…LTKKIEVRSE (110 aa)).

It belongs to the small heat shock protein (HSP20) family.

This Leptospira interrogans serogroup Icterohaemorrhagiae serovar Lai (strain 56601) protein is Probable 15 kDa heat shock protein (hsp15).